Here is a 397-residue protein sequence, read N- to C-terminus: Protein WRKY1 (397 aa).

Residues 326–392 (KVADIPADEF…YEGDHNHNRV (67 aa)) constitute a DNA-binding region (WRKY).

This sequence belongs to the WRKY group II-d family. As to quaternary structure, interacts with RS2. As to expression, more abundant in apices and young leaf primordia than in fully expanded leaf tissues.

It is found in the nucleus. Its function is as follows. Transcription factor. Interacts specifically with the W box (5'-(T)TGAC[CT]-3'), a frequently occurring elicitor-responsive cis-acting element. In Zea mays (Maize), this protein is Protein WRKY1.